The chain runs to 374 residues: Pulmonary surfactant-associated protein D (374 aa).

Positions 1-19 (MLHFLSMLVLLVQPLGDLG) are cleaved as a signal peptide. 2 positions are modified to S-nitrosocysteine: Cys34 and Cys39. Residues 40-221 (SPTENGLPGR…RGIKGESGLP (182 aa)) are disordered. Residues 45-221 (GLPGRDGRDG…RGIKGESGLP (177 aa)) enclose the Collagen-like domain. Basic and acidic residues predominate over residues 49–64 (RDGRDGREGPRGEKGD). Pro77 is modified (hydroxyproline). The residue at position 86 (Lys86) is a 5-hydroxylysine. The N-linked (GlcNAc...) asparagine glycan is linked to Asn89. Pro95 is modified (hydroxyproline). Lys98 carries the post-translational modification 5-hydroxylysine. Residue Ser109 is modified to Phosphoserine. 2 stretches are compositionally biased toward low complexity: residues 137–163 (KGEA…PAGP) and 170–200 (PGEQ…RGPP). Residues Pro170 and Pro176 each carry the hydroxyproline modification. Residues 203-215 (KGDRGAPGDRGIK) show a composition bias toward basic and acidic residues. The stretch at 222 to 253 (DSAALRQQMEALNGKLQRLEAAFSRYKKAALF) forms a coiled coil. Residues 259 to 374 (VGDKIFRAAN…GEQRLVICEF (116 aa)) form the C-type lectin domain. 2 cysteine pairs are disulfide-bonded: Cys280/Cys372 and Cys350/Cys364.

It belongs to the SFTPD family. As to quaternary structure, oligomeric complex of 4 set of homotrimers. Post-translationally, S-nitrosylation at Cys-34 and Cys-39 alters the quaternary structure which results in a pro-inflammatory chemoattractive signaling activity with macrophages.

The protein localises to the secreted. The protein resides in the extracellular space. It localises to the extracellular matrix. Its subcellular location is the surface film. In terms of biological role, contributes to the lung's defense against inhaled microorganisms, organic antigens and toxins. Interacts with compounds such as bacterial lipopolysaccharides, oligosaccharides and fatty acids and modulates leukocyte action in immune response. May participate in the extracellular reorganization or turnover of pulmonary surfactant. Binds strongly maltose residues and to a lesser extent other alpha-glucosyl moieties. In Rattus norvegicus (Rat), this protein is Pulmonary surfactant-associated protein D (Sftpd).